Consider the following 327-residue polypeptide: Transaldolase (327 aa).

The active-site Schiff-base intermediate with substrate is the K132.

It belongs to the transaldolase family. Type 1 subfamily.

Its subcellular location is the cytoplasm. It carries out the reaction D-sedoheptulose 7-phosphate + D-glyceraldehyde 3-phosphate = D-erythrose 4-phosphate + beta-D-fructose 6-phosphate. It functions in the pathway carbohydrate degradation; pentose phosphate pathway; D-glyceraldehyde 3-phosphate and beta-D-fructose 6-phosphate from D-ribose 5-phosphate and D-xylulose 5-phosphate (non-oxidative stage): step 2/3. Functionally, transaldolase is important for the balance of metabolites in the pentose-phosphate pathway. In Chlamydia muridarum (strain MoPn / Nigg), this protein is Transaldolase.